A 348-amino-acid chain; its full sequence is Enkurin domain-containing protein 1 (348 aa).

Disordered regions lie at residues 1 to 65 (MCEG…RPGG), 84 to 195 (GGIS…PSAK), and 262 to 282 (AEAR…TRMP). Residue serine 93 is modified to Phosphoserine. Positions 95–127 (KRKDPKDHEKENMRRIREIQRRFREQEHSREQG) are enriched in basic and acidic residues. Phosphoserine is present on serine 138. Basic and acidic residues predominate over residues 139 to 148 (PKYDKVESRV). Positions 253 to 345 (ERRDLWRREA…IFSRPKVFVK (93 aa)) constitute an Enkurin domain.

As to quaternary structure, interacts with alpha-tubulin. Interacts (via central region) with CCP110 (via N-terminal region); competes with CEP97 for binding to CCP110.

It is found in the cytoplasm. It localises to the cytoskeleton. The protein localises to the microtubule organizing center. The protein resides in the centrosome. Its subcellular location is the centriole. It is found in the cilium basal body. It localises to the cell projection. The protein localises to the cilium. The protein resides in the spindle. Its subcellular location is the spindle pole. It is found in the cilium axoneme. Functionally, microtubule-binding protein which regulates microtubule organization and stability. Promotes the stability of astral microtubules and facilitates the proper orientation of the mitotic spindle. This allows the oriented division of basal keratinocytes and contributes to epidermal stratification. Required for the assembly of both primary and motile cilia. Destabilizes the interaction between CCP110 and CEP97 by competing with CEP97 for binding to CCP110 which promotes the removal of CCP110 and CEP97 from the mother centriole and allows the initiation of ciliogenesis. The chain is Enkurin domain-containing protein 1 (ENKD1) from Bos taurus (Bovine).